The sequence spans 131 residues: Large ribosomal subunit protein bL17 (131 aa).

Belongs to the bacterial ribosomal protein bL17 family. Part of the 50S ribosomal subunit. Contacts protein L32.

In Janthinobacterium sp. (strain Marseille) (Minibacterium massiliensis), this protein is Large ribosomal subunit protein bL17.